Here is a 470-residue protein sequence, read N- to C-terminus: 6-phospho-beta-galactosidase 1 (470 aa).

Residues Gln-23, His-120, Asn-163, Glu-164, and Asn-300 each coordinate D-galactose 6-phosphate. Glu-164 functions as the Proton donor in the catalytic mechanism. Residue Glu-378 is the Nucleophile of the active site. Positions 434, 435, 441, and 443 each coordinate D-galactose 6-phosphate.

This sequence belongs to the glycosyl hydrolase 1 family.

The catalysed reaction is a 6-phospho-beta-D-galactoside + H2O = D-galactose 6-phosphate + an alcohol. It participates in carbohydrate metabolism; lactose degradation; D-galactose 6-phosphate and beta-D-glucose from lactose 6-phosphate: step 1/1. The chain is 6-phospho-beta-galactosidase 1 from Streptococcus pneumoniae serotype 4 (strain ATCC BAA-334 / TIGR4).